The following is a 333-amino-acid chain: MSEKHLTYADSGVDITKEEKTVKTLIEKLSYVRKGMGAPLTGIGHYAGLLDFGEYALALTTDGVGSKVLIANEMQRWNTVGIDCIAMNVNDLLAIGAEPVAFVDYLALEKHEEGFAAQIGEGLVKGAEISRMSIVGGETATLPEIIKGFDLAGTCLGIVRKDEIVEGEKVRVGDVIVGVPSTGVHSNGYTLVRKIIEESRYSYHDPCPYDNSKMIGDELLTPTRIYIEILDVLKACEVHGLAHITGSGLLKLRRVTKLGFDFYDPLEPQEIFKFLQKEGGVEDLEMYRTFNMGMGFLVILPEKDAAKAAKITGGKIVGKIVESGIRVKDLVIE.

This sequence belongs to the AIR synthase family.

The protein localises to the cytoplasm. It carries out the reaction 2-formamido-N(1)-(5-O-phospho-beta-D-ribosyl)acetamidine + ATP = 5-amino-1-(5-phospho-beta-D-ribosyl)imidazole + ADP + phosphate + H(+). Its pathway is purine metabolism; IMP biosynthesis via de novo pathway; 5-amino-1-(5-phospho-D-ribosyl)imidazole from N(2)-formyl-N(1)-(5-phospho-D-ribosyl)glycinamide: step 2/2. This chain is Phosphoribosylformylglycinamidine cyclo-ligase, found in Methanosarcina barkeri (strain Fusaro / DSM 804).